The following is a 191-amino-acid chain: Transmembrane protein 17B (191 aa).

4 consecutive transmembrane segments (helical) span residues 50–70, 83–103, 115–135, and 147–167; these read MSLY…VVML, FILI…LYLG, LAGF…FQLF, and GVHI…FVAL.

This sequence belongs to the TMEM17 family. As to quaternary structure, part of the tectonic-like complex (also named B9 complex).

The protein localises to the cell projection. It localises to the cilium membrane. Transmembrane component of the tectonic-like complex, a complex localized at the transition zone of primary cilia and acting as a barrier that prevents diffusion of transmembrane proteins between the cilia and plasma membranes. Required for ciliogenesis and sonic hedgehog/SHH signaling. This is Transmembrane protein 17B (Tmem17b) from Danio rerio (Zebrafish).